The chain runs to 464 residues: MGKRLLDKLWERHVVTTNENGLDLLYIDLHLVHEVTSPQAFEGLRLTNRTVRRPDLTFATMDHNIPTKDVWNITDRIAKQQLDMLRENCKQFQVPLADIGDEEQGIVHVIGPELGLTQPGKTIVCGDSHTATHGAFGALAFGIGTSEVEHVLATQTLWQRKPKAMGIELKGKLQKGVYAKDIILHLLSKYGVAVGTGYVMEFYGETIGTMEMEERMTLCNMAIEGGAKAGIIAPDEKTFAYVKGRKYAPRDYETFEKKWFELYTDADAIYDLHISIDVTDLAPYVTWGTNPSMGVRIDEKLPEKHDVNDERAFSYMGLIPGQSTYDIPVQHVFIGSCTNSRLSDLEIAASVVKGRKVKEGVRALVVPGSKRVRDAAMQKGLHHIFEEAGFEWREPGCSMCLGMNPDQVPEGEHCASTSNRNFEGRQGKGARTHLVSPAMAAAAALYGHFVDIRKESYDGAISYS.

[4Fe-4S] cluster-binding residues include Cys337, Cys397, and Cys400.

Belongs to the aconitase/IPM isomerase family. LeuC type 1 subfamily. In terms of assembly, heterodimer of LeuC and LeuD. [4Fe-4S] cluster serves as cofactor.

The enzyme catalyses (2R,3S)-3-isopropylmalate = (2S)-2-isopropylmalate. Its pathway is amino-acid biosynthesis; L-leucine biosynthesis; L-leucine from 3-methyl-2-oxobutanoate: step 2/4. Catalyzes the isomerization between 2-isopropylmalate and 3-isopropylmalate, via the formation of 2-isopropylmaleate. This is 3-isopropylmalate dehydratase large subunit from Bacillus cereus (strain AH820).